We begin with the raw amino-acid sequence, 533 residues long: Intestinal-type alkaline phosphatase (533 aa).

The first 19 residues, 1 to 19, serve as a signal peptide directing secretion; it reads MQGACVLLLLGLHLQLSLG. D61 contacts Mg(2+). Zn(2+) contacts are provided by D61 and S111. The active-site Phosphoserine intermediate is the S111. C140 and C202 are oxidised to a cystine. Residue S174 coordinates Mg(2+). Ca(2+) is bound at residue E235. A glycan (N-linked (GlcNAc...) asparagine) is linked at N268. Ca(2+)-binding residues include F288, E289, and D304. A Mg(2+)-binding site is contributed by E330. The Zn(2+) site is built by D335, H339, D376, and H377. A glycan (N-linked (GlcNAc...) asparagine) is linked at N429. H451 contacts Zn(2+). C486 and C493 form a disulfide bridge. Residue D506 is the site of GPI-anchor amidated aspartate attachment. Residues 507–533 constitute a propeptide, removed in mature form; the sequence is AAHLAASPPPLALLAGAMLLLLAPTLY.

The protein belongs to the alkaline phosphatase family. As to quaternary structure, homodimer. Mg(2+) is required as a cofactor. Requires Zn(2+) as cofactor. Ca(2+) serves as cofactor.

It localises to the cell membrane. The catalysed reaction is a phosphate monoester + H2O = an alcohol + phosphate. Its function is as follows. Alkaline phosphatase that can hydrolyze various phosphate compounds. In Bos taurus (Bovine), this protein is Intestinal-type alkaline phosphatase (ALPI).